A 329-amino-acid polypeptide reads, in one-letter code: Transcription factor RAX1 (329 aa).

HTH myb-type domains lie at 9–62 and 63–117; these read KTKV…LNYL and RPNI…RKKL. 2 DNA-binding regions (H-T-H motif) span residues 38–62 and 90–113; these read WISFPLKAGLRRCGKSCRLRWLNYL and WSIIAAHLPGRTDNDIKNYWNTKL. 2 stretches are compositionally biased toward low complexity: residues 122-131 and 144-154; these read SDSSSSAMAS and PTSPTTIPSSS. The segment at 122–162 is disordered; that stretch reads SDSSSSAMASPYLNPISQDVKRPTSPTTIPSSSYNPYAENP.

As to expression, mostly expressed in roots. Also present in shoot tips and flower buds.

It is found in the nucleus. Functionally, transcription activator of genes involved in the regulation of meristematic competence, such as CUC2. Positively regulates axillary meristems (AMs) formation and development, especially at early phases of vegetative growth, probably by specifying a stem cell niche for AM formation. Modulates the negative regulation mediated by gibberellic acid on the timing of developmental phase transitions. The polypeptide is Transcription factor RAX1 (RAX1) (Arabidopsis thaliana (Mouse-ear cress)).